The sequence spans 214 residues: Pyridoxine/pyridoxamine 5'-phosphate oxidase (214 aa).

Substrate contacts are provided by residues 9-12 and Lys-67; that span reads RKDY. FMN is bound by residues 62–67, 77–78, Arg-83, Lys-84, and Gln-106; these read RMVLLK and FT. Tyr-124, Arg-128, and Ser-132 together coordinate substrate. Residues 141 to 142 and Trp-186 contribute to the FMN site; that span reads QS. Residue 192–194 coordinates substrate; the sequence is RLH. Arg-196 is an FMN binding site.

It belongs to the pyridoxamine 5'-phosphate oxidase family. As to quaternary structure, homodimer. Requires FMN as cofactor.

The catalysed reaction is pyridoxamine 5'-phosphate + O2 + H2O = pyridoxal 5'-phosphate + H2O2 + NH4(+). It catalyses the reaction pyridoxine 5'-phosphate + O2 = pyridoxal 5'-phosphate + H2O2. The protein operates within cofactor metabolism; pyridoxal 5'-phosphate salvage; pyridoxal 5'-phosphate from pyridoxamine 5'-phosphate: step 1/1. Its pathway is cofactor metabolism; pyridoxal 5'-phosphate salvage; pyridoxal 5'-phosphate from pyridoxine 5'-phosphate: step 1/1. In terms of biological role, catalyzes the oxidation of either pyridoxine 5'-phosphate (PNP) or pyridoxamine 5'-phosphate (PMP) into pyridoxal 5'-phosphate (PLP). The chain is Pyridoxine/pyridoxamine 5'-phosphate oxidase from Trichormus variabilis (strain ATCC 29413 / PCC 7937) (Anabaena variabilis).